The following is a 667-amino-acid chain: Endogenous retrovirus group K member 5 Gag polyprotein (667 aa).

A lipid anchor (N-myristoyl glycine) is attached at Gly-2. Positions Lys-166–Gln-188 are disordered. CCHC-type zinc fingers lie at residues Lys-543–Val-560 and Gly-580–Ser-597. Residues Lys-598–Gln-667 are disordered. Residues Gly-648 to Gln-667 show a composition bias toward polar residues.

This sequence belongs to the beta type-B retroviral Gag protein family. HERV class-II K(HML-2) gag subfamily. Myristoylation is essential for retroviral assembly. Alteration of the glycine residue leads to a block in the budding of particles and an accumulation of Gag inside the cell. In terms of processing, specific enzymatic cleavages may yield mature proteins.

It is found in the cell membrane. Functionally, the products of the Gag polyproteins of infectious retroviruses perform highly complex orchestrated tasks during the assembly, budding, maturation, and infection stages of the viral replication cycle. During viral assembly, the proteins form membrane associations and self-associations that ultimately result in budding of an immature virion from the infected cell. Gag precursors also function during viral assembly to selectively bind and package two plus strands of genomic RNA. Endogenous Gag proteins may have kept, lost or modified their original function during evolution. The protein is Endogenous retrovirus group K member 5 Gag polyprotein (ERVK-5) of Homo sapiens (Human).